We begin with the raw amino-acid sequence, 212 residues long: Phosphatidylserine decarboxylase proenzyme (212 aa).

Residue S182 is the Schiff-base intermediate with substrate; via pyruvic acid of the active site. Residue S182 is modified to Pyruvic acid (Ser); by autocatalysis.

The protein belongs to the phosphatidylserine decarboxylase family. PSD-A subfamily. Heterodimer of a large membrane-associated beta subunit and a small pyruvoyl-containing alpha subunit. Requires pyruvate as cofactor. In terms of processing, is synthesized initially as an inactive proenzyme. Formation of the active enzyme involves a self-maturation process in which the active site pyruvoyl group is generated from an internal serine residue via an autocatalytic post-translational modification. Two non-identical subunits are generated from the proenzyme in this reaction, and the pyruvate is formed at the N-terminus of the alpha chain, which is derived from the carboxyl end of the proenzyme. The post-translation cleavage follows an unusual pathway, termed non-hydrolytic serinolysis, in which the side chain hydroxyl group of the serine supplies its oxygen atom to form the C-terminus of the beta chain, while the remainder of the serine residue undergoes an oxidative deamination to produce ammonia and the pyruvoyl prosthetic group on the alpha chain.

The protein resides in the cell membrane. It carries out the reaction a 1,2-diacyl-sn-glycero-3-phospho-L-serine + H(+) = a 1,2-diacyl-sn-glycero-3-phosphoethanolamine + CO2. Its pathway is phospholipid metabolism; phosphatidylethanolamine biosynthesis; phosphatidylethanolamine from CDP-diacylglycerol: step 2/2. Its function is as follows. Catalyzes the formation of phosphatidylethanolamine (PtdEtn) from phosphatidylserine (PtdSer). This is Phosphatidylserine decarboxylase proenzyme from Paraburkholderia phymatum (strain DSM 17167 / CIP 108236 / LMG 21445 / STM815) (Burkholderia phymatum).